The primary structure comprises 593 residues: Putative auxin response factor 15 (593 aa).

A DNA-binding region (TF-B3) is located at residues 126-228; the sequence is FTKVLTASDI…ELRVGIRRAR (103 aa). The PB1 domain maps to 511 to 592; the sequence is RTCTKVQMQG…MVKRIYIQKR (82 aa).

The protein belongs to the ARF family. In terms of assembly, homodimers and heterodimers.

It is found in the nucleus. Functionally, auxin response factors (ARFs) are transcriptional factors that bind specifically to the DNA sequence 5'-TGTCTC-3' found in the auxin-responsive promoter elements (AuxREs). Could act as transcriptional activator or repressor. Formation of heterodimers with Aux/IAA proteins may alter their ability to modulate early auxin response genes expression. This Arabidopsis thaliana (Mouse-ear cress) protein is Putative auxin response factor 15 (ARF15).